The following is a 238-amino-acid chain: Aspartate/glutamate leucyltransferase (238 aa).

The protein belongs to the R-transferase family. Bpt subfamily.

It localises to the cytoplasm. The enzyme catalyses N-terminal L-glutamyl-[protein] + L-leucyl-tRNA(Leu) = N-terminal L-leucyl-L-glutamyl-[protein] + tRNA(Leu) + H(+). It catalyses the reaction N-terminal L-aspartyl-[protein] + L-leucyl-tRNA(Leu) = N-terminal L-leucyl-L-aspartyl-[protein] + tRNA(Leu) + H(+). In terms of biological role, functions in the N-end rule pathway of protein degradation where it conjugates Leu from its aminoacyl-tRNA to the N-termini of proteins containing an N-terminal aspartate or glutamate. The sequence is that of Aspartate/glutamate leucyltransferase from Nitrosococcus oceani (strain ATCC 19707 / BCRC 17464 / JCM 30415 / NCIMB 11848 / C-107).